An 80-amino-acid polypeptide reads, in one-letter code: Phycocyanin-645 alpha-1 chain (80 aa).

Arginine 16 lines the (2R,3E)-phycocyanobilin pocket. 4 residues coordinate mesobiliverdin: cysteine 18, glutamine 24, tyrosine 25, and lysine 40. The 15,16-dihydrobiliverdin site is built by proline 71 and isoleucine 73.

The protein belongs to the phycoerythrin family. As to quaternary structure, heterotetramer of 2 different alpha chains and 2 identical beta chains which form 2 alpha-beta heterodimers within the heterotetramer. Post-translationally, contains one phycocyanobilin chromophore, one mesobiliverdin chromophore and one 15,16-dihydrobiliverdin chromophore with binding mediated by both the alpha and beta subunits.

It localises to the plastid. The protein localises to the chloroplast thylakoid membrane. Functionally, light-harvesting photosynthetic tetrapyrrole chromophore-protein from the phycobiliprotein complex. This Chroomonas sp protein is Phycocyanin-645 alpha-1 chain.